The sequence spans 909 residues: Probable DNA-directed RNA polymerase subunit beta (909 aa).

This sequence belongs to the RNA polymerase beta chain family.

The catalysed reaction is RNA(n) + a ribonucleoside 5'-triphosphate = RNA(n+1) + diphosphate. Functionally, required for late and very late gene expression. May be a component of the novel RNA polymerase activity induced by baculovirus infection. The sequence is that of Probable DNA-directed RNA polymerase subunit beta (LEF-8) from Lepidoptera (butterflies and moths).